The chain runs to 562 residues: Potassium voltage-gated channel subfamily V member 2 (562 aa).

A compositionally biased stretch (basic and acidic residues) spans 1–10 (MLKQSNERRW). Residues 1 to 34 (MLKQSNERRWSLSYKPWSTPETEDVPNTGSNQHR) are disordered. Residues 1-163 (MLKQSNERRW…TDEYFFDRDP (163 aa)) lie on the Cytoplasmic side of the membrane. The helical transmembrane segment at 164–184 (AVFQLIYNFYTSGVLLVRDEL) threads the bilayer. The Extracellular portion of the chain corresponds to 185–269 (CPRSFLEELG…KPFSSVAAKA (85 aa)). The helical transmembrane segment at 270-290 (MGVATNLFVLISVVALALNTV) threads the bilayer. The Cytoplasmic portion of the chain corresponds to 291 to 344 (EEMQHQAEQGTGGGDPRPILEHVEMLCVAFFTLEFLLRLASTPNLQRFARSALN). Residues 345–365 (LVDLVAILPFYLQLLLECFTS) traverse the membrane as a helical segment. Residues 366–391 (EDQRHNKDSPREHDLETVGRVGKVGQ) are Extracellular-facing. Residues 392–412 (VLRIMRLMRIFRILKLARHST) form a helical; Voltage-sensor membrane-spanning segment. At 413–427 (GLRAFGFTLRQCYQQ) the chain is on the cytoplasmic side. Residues 428 to 448 (VGCLMLFITMGIFSFSAAVYS) traverse the membrane as a helical segment. The Extracellular portion of the chain corresponds to 449–461 (VEHDVPGTNFTSI). Asn457 carries an N-linked (GlcNAc...) asparagine glycan. The pore-forming intramembrane region spans 462–482 (LHAWWWAAVSISTVGYGDMYP). A Selectivity filter motif is present at residues 474–479 (TVGYGD). The Extracellular portion of the chain corresponds to 483–488 (ETHLGR). Residues 489-509 (LFAFLCIAFGIILNGMPISIL) form a helical membrane-spanning segment. The Cytoplasmic segment spans residues 510-562 (YNKFSDYYSKLKAYEYTAIRRERGKVNFMQRATKKMAECLSESHAQSTTRQEN).

Belongs to the potassium channel family. V (TC 1.A.1.2) subfamily. Kv8.2/KCNV2 sub-subfamily. In terms of assembly, heteromultimer with KCNB1, KCNC1 and KCNF1. Does not form homomultimers.

It localises to the cell membrane. In terms of biological role, potassium channel subunit. Modulates channel activity by shifting the threshold and the half-maximal activation to more negative values. This is Potassium voltage-gated channel subfamily V member 2 (Kcnv2) from Mus musculus (Mouse).